The primary structure comprises 785 residues: uncharacterized protein (785 aa).

The PE domain occupies 1-93 (MSWVMVSPEL…GGAYAAAEAA (93 aa)).

The protein belongs to the mycobacterial PE family. PGRS subfamily.

This is an uncharacterized protein from Mycobacterium tuberculosis (strain CDC 1551 / Oshkosh).